The sequence spans 299 residues: MTTMTTNTRRTVWRTVWREIHVSWLFIRSDRWTTLFPATCFVLAAAVHTRLPPAETAVAVASGVLYFWLFVYEHTLANQLVGLEEDRVNKPLRPLVSGRSSVRGARLRLIAVRVAFPLYGWFLGVLEWALLWQVLSLLQHEGGWGRHWLGRNLYAGIGVVAQLAAAWEIVAPVTPDAWRWIVTLTITVTLLMSVQDLRDITGDRAVGRSTMPLVFGERNTRVFLCAGFALGPLAIHHFLMAPAGPHWWIVATDVVLGGLSLLLAFRVVLRRGQRSDQHTYRLVEQWYTLALAASLYTLR.

The next 7 membrane-spanning stretches (helical) occupy residues 32–49 (WTTL…AVHT), 56–72 (TAVA…LFVY), 110–132 (IAVR…ALLW), 153–171 (LYAG…EIVA), 177–194 (AWRW…LMSV), 222–241 (VFLC…FLMA), and 247–269 (WWIV…RVVL).

This sequence belongs to the UbiA prenyltransferase family. Mg(2+) serves as cofactor.

The protein resides in the cell membrane. The enzyme catalyses (2E,6E,10E,14E)-geranylfarnesyl diphosphate = somaliensene A + diphosphate. It catalyses the reaction (2E,6E,10E,14E)-geranylfarnesyl diphosphate = (-)-somaliensene B + diphosphate. Its pathway is secondary metabolite biosynthesis; terpenoid biosynthesis. Sesterterpene cyclase, which converts geranylfarnesyl diphosphate (GFPP) into the terpenes somaliensene A and somaliensene B. This is Somaliensene A/B synthase from Streptomyces somaliensis (strain ATCC 33201 / DSM 40738 / JCM 12659 / KCTC 9044 / NCTC 11332 / NRRL B-12077 / IP 733).